Here is a 274-residue protein sequence, read N- to C-terminus: 2,3,4,5-tetrahydropyridine-2,6-dicarboxylate N-succinyltransferase (274 aa).

Positions 104 and 141 each coordinate substrate.

Belongs to the transferase hexapeptide repeat family. As to quaternary structure, homotrimer.

It is found in the cytoplasm. It catalyses the reaction (S)-2,3,4,5-tetrahydrodipicolinate + succinyl-CoA + H2O = (S)-2-succinylamino-6-oxoheptanedioate + CoA. It functions in the pathway amino-acid biosynthesis; L-lysine biosynthesis via DAP pathway; LL-2,6-diaminopimelate from (S)-tetrahydrodipicolinate (succinylase route): step 1/3. This chain is 2,3,4,5-tetrahydropyridine-2,6-dicarboxylate N-succinyltransferase, found in Shigella boydii serotype 4 (strain Sb227).